The chain runs to 362 residues: Anthranilate phosphoribosyltransferase (362 aa).

Residues glycine 96, 99–100, threonine 104, 106–109, 124–132, and glycine 136 each bind 5-phospho-alpha-D-ribose 1-diphosphate; these read GD, NIST, and KHGNRAASS. Anthranilate is bound at residue glycine 96. Residue serine 108 participates in Mg(2+) binding. Residue asparagine 127 participates in anthranilate binding. Arginine 182 lines the anthranilate pocket. Mg(2+) is bound by residues aspartate 240 and glutamate 241.

It belongs to the anthranilate phosphoribosyltransferase family. Homodimer. Mg(2+) is required as a cofactor.

The catalysed reaction is N-(5-phospho-beta-D-ribosyl)anthranilate + diphosphate = 5-phospho-alpha-D-ribose 1-diphosphate + anthranilate. It participates in amino-acid biosynthesis; L-tryptophan biosynthesis; L-tryptophan from chorismate: step 2/5. Its function is as follows. Catalyzes the transfer of the phosphoribosyl group of 5-phosphorylribose-1-pyrophosphate (PRPP) to anthranilate to yield N-(5'-phosphoribosyl)-anthranilate (PRA). The polypeptide is Anthranilate phosphoribosyltransferase (Rhodococcus opacus (strain B4)).